Consider the following 292-residue polypeptide: 4-hydroxy-tetrahydrodipicolinate synthase (292 aa).

Threonine 45 contacts pyruvate. The active-site Proton donor/acceptor is tyrosine 133. The active-site Schiff-base intermediate with substrate is lysine 161. Isoleucine 203 contacts pyruvate.

It belongs to the DapA family. Homotetramer; dimer of dimers.

Its subcellular location is the cytoplasm. The catalysed reaction is L-aspartate 4-semialdehyde + pyruvate = (2S,4S)-4-hydroxy-2,3,4,5-tetrahydrodipicolinate + H2O + H(+). It participates in amino-acid biosynthesis; L-lysine biosynthesis via DAP pathway; (S)-tetrahydrodipicolinate from L-aspartate: step 3/4. In terms of biological role, catalyzes the condensation of (S)-aspartate-beta-semialdehyde [(S)-ASA] and pyruvate to 4-hydroxy-tetrahydrodipicolinate (HTPA). The polypeptide is 4-hydroxy-tetrahydrodipicolinate synthase (Nitrosomonas europaea (strain ATCC 19718 / CIP 103999 / KCTC 2705 / NBRC 14298)).